The following is a 215-amino-acid chain: Cytochrome b-c1 complex subunit Rieske, mitochondrial (215 aa).

The transit peptide at 1-22 directs the protein to the mitochondrion; sequence MLGIRSSVKTCFKPMSLTSKRL. A propeptide spans 23 to 30 (removed in mature form); the sequence is ISQSLLAS. The Mitochondrial matrix portion of the chain corresponds to 31–50; it reads KSTYRTPNFDDVLKENNDAD. The chain crosses the membrane as a helical span at residues 51–80; it reads KGRSYAYFMVGAMGLLSSAGAKSTVETFIS. Topologically, residues 81-215 are mitochondrial intermembrane; the sequence is SMTATADVLA…EFDGDKVIVG (135 aa). The tract at residues 90–93 is hinge; it reads AMAK. In terms of domain architecture, Rieske spans 123–214; the sequence is PHEIQEANSV…YEFDGDKVIV (92 aa). The [2Fe-2S] cluster site is built by Cys159, His161, Cys178, and His181. Cys164 and Cys180 form a disulfide bridge.

Belongs to the Rieske iron-sulfur protein family. Component of the ubiquinol-cytochrome c oxidoreductase (cytochrome b-c1 complex, complex III, CIII), a multisubunit enzyme composed of 10 subunits. The complex is composed of 3 respiratory subunits cytochrome b (COB), cytochrome c1 (CYT1) and Rieske protein (RIP1), 2 core protein subunits COR1 and QCR2, and 5 low-molecular weight protein subunits QCR6, QCR7, QCR8, QCR9 and QCR10. The complex exists as an obligatory dimer and forms supercomplexes (SCs) in the inner mitochondrial membrane with a monomer or a dimer of cytochrome c oxidase (complex IV, CIV), resulting in 2 different assemblies (supercomplexes III(2)IV and III(2)IV(2)). RIP1 interacts with QCR10 on the intermembrane space (IMS) side, and with QCR9. The cofactor is [2Fe-2S] cluster. In terms of processing, processed by both the mitochondrial processing peptidase (MPP) and the mitochondrial intermediate protease (MIP). Initially, MPP removes 22 amino acids from the newly imported precursor in the mitochondrial matrix. This proteolytic processing is then followed by a second proteolytic cleavage by MIP, which removes an octapeptide to generate mature-sized RIP1.

The protein localises to the mitochondrion inner membrane. The enzyme catalyses a quinol + 2 Fe(III)-[cytochrome c](out) = a quinone + 2 Fe(II)-[cytochrome c](out) + 2 H(+)(out). Component of the ubiquinol-cytochrome c oxidoreductase, a multisubunit transmembrane complex that is part of the mitochondrial electron transport chain which drives oxidative phosphorylation. The respiratory chain contains 3 multisubunit complexes succinate dehydrogenase (complex II, CII), ubiquinol-cytochrome c oxidoreductase (cytochrome b-c1 complex, complex III, CIII) and cytochrome c oxidase (complex IV, CIV), that cooperate to transfer electrons derived from NADH and succinate to molecular oxygen, creating an electrochemical gradient over the inner membrane that drives transmembrane transport and the ATP synthase. The cytochrome b-c1 complex catalyzes electron transfer from ubiquinol to cytochrome c, linking this redox reaction to translocation of protons across the mitochondrial inner membrane, with protons being carried across the membrane as hydrogens on the quinol. In the process called Q cycle, 2 protons are consumed from the matrix, 4 protons are released into the intermembrane space and 2 electrons are passed to cytochrome c. The Rieske protein is a catalytic core subunit containing a [2Fe-2S] iron-sulfur cluster. It cycles between 2 conformational states during catalysis to transfer electrons from the quinol bound in the Q(0) site in cytochrome b (COB) to cytochrome c1 (CYT1). The chain is Cytochrome b-c1 complex subunit Rieske, mitochondrial (RIP1) from Saccharomyces cerevisiae (strain ATCC 204508 / S288c) (Baker's yeast).